A 252-amino-acid chain; its full sequence is tRNA (guanine-N(1)-)-methyltransferase (252 aa).

S-adenosyl-L-methionine-binding positions include G113 and 133–138 (IGDYVL).

It belongs to the RNA methyltransferase TrmD family. Homodimer.

It is found in the cytoplasm. The catalysed reaction is guanosine(37) in tRNA + S-adenosyl-L-methionine = N(1)-methylguanosine(37) in tRNA + S-adenosyl-L-homocysteine + H(+). Its function is as follows. Specifically methylates guanosine-37 in various tRNAs. In Xanthomonas campestris pv. campestris (strain B100), this protein is tRNA (guanine-N(1)-)-methyltransferase.